The sequence spans 129 residues: Protein PerB (129 aa).

Its function is as follows. Positive regulatory protein of bfpA, the gene coding for the bundle-forming pilus of EPEC. The chain is Protein PerB (perB) from Escherichia coli O111:H-.